We begin with the raw amino-acid sequence, 498 residues long: Glycerol kinase (498 aa).

An ADP-binding site is contributed by Thr-12. The ATP site is built by Thr-12, Thr-13, and Ser-14. Sn-glycerol 3-phosphate is bound at residue Thr-12. Arg-16 contacts ADP. Residues Arg-82, Glu-83, Tyr-134, and Asp-243 each contribute to the sn-glycerol 3-phosphate site. Positions 82, 83, 134, 243, and 244 each coordinate glycerol. The ADP site is built by Thr-265 and Gly-308. Positions 265, 308, 312, and 409 each coordinate ATP. Gly-409 and Asn-413 together coordinate ADP.

This sequence belongs to the FGGY kinase family.

It carries out the reaction glycerol + ATP = sn-glycerol 3-phosphate + ADP + H(+). Its pathway is polyol metabolism; glycerol degradation via glycerol kinase pathway; sn-glycerol 3-phosphate from glycerol: step 1/1. Inhibited by fructose 1,6-bisphosphate (FBP). In terms of biological role, key enzyme in the regulation of glycerol uptake and metabolism. Catalyzes the phosphorylation of glycerol to yield sn-glycerol 3-phosphate. The polypeptide is Glycerol kinase (Petrotoga mobilis (strain DSM 10674 / SJ95)).